Consider the following 492-residue polypeptide: Probable cobyric acid synthase (492 aa).

One can recognise a GATase cobBQ-type domain in the interval 248 to 434; that stretch reads PVRIAVVRLP…MHGLFQNPGA (187 aa). The Nucleophile role is filled by cysteine 327. Histidine 426 is an active-site residue.

It belongs to the CobB/CobQ family. CobQ subfamily.

It participates in cofactor biosynthesis; adenosylcobalamin biosynthesis. Functionally, catalyzes amidations at positions B, D, E, and G on adenosylcobyrinic A,C-diamide. NH(2) groups are provided by glutamine, and one molecule of ATP is hydrogenolyzed for each amidation. This is Probable cobyric acid synthase from Methanoculleus marisnigri (strain ATCC 35101 / DSM 1498 / JR1).